A 181-amino-acid chain; its full sequence is Proteinase inhibitor A (181 aa).

A signal peptide spans 1 to 24 (MAASNALLLISGVLLISLAVLCHG). 3 disulfides stabilise this stretch: Cys-67–Cys-113, Cys-134–Cys-143, and Cys-136–Cys-139.

The protein belongs to the protease inhibitor I3 (leguminous Kunitz-type inhibitor) family.

It localises to the secreted. In terms of biological role, possesses two reactive sites. Inhibits an equimolar amount of trypsin and chymotrypsin simultaneously, and inhibits kallikrein weakly. This chain is Proteinase inhibitor A, found in Sagittaria sagittifolia (Arrowhead).